The primary structure comprises 317 residues: Transaldolase (317 aa).

The active-site Schiff-base intermediate with substrate is the Lys132.

Belongs to the transaldolase family. Type 1 subfamily. In terms of assembly, homodimer.

It localises to the cytoplasm. It carries out the reaction D-sedoheptulose 7-phosphate + D-glyceraldehyde 3-phosphate = D-erythrose 4-phosphate + beta-D-fructose 6-phosphate. Its pathway is carbohydrate degradation; pentose phosphate pathway; D-glyceraldehyde 3-phosphate and beta-D-fructose 6-phosphate from D-ribose 5-phosphate and D-xylulose 5-phosphate (non-oxidative stage): step 2/3. In terms of biological role, transaldolase is important for the balance of metabolites in the pentose-phosphate pathway. The sequence is that of Transaldolase from Yersinia pseudotuberculosis serotype O:3 (strain YPIII).